The following is a 345-amino-acid chain: UDP-3-O-acylglucosamine N-acyltransferase (345 aa).

His-239 serves as the catalytic Proton acceptor.

Belongs to the transferase hexapeptide repeat family. LpxD subfamily. Homotrimer.

The enzyme catalyses a UDP-3-O-[(3R)-3-hydroxyacyl]-alpha-D-glucosamine + a (3R)-hydroxyacyl-[ACP] = a UDP-2-N,3-O-bis[(3R)-3-hydroxyacyl]-alpha-D-glucosamine + holo-[ACP] + H(+). Its pathway is bacterial outer membrane biogenesis; LPS lipid A biosynthesis. Its function is as follows. Catalyzes the N-acylation of UDP-3-O-acylglucosamine using 3-hydroxyacyl-ACP as the acyl donor. Is involved in the biosynthesis of lipid A, a phosphorylated glycolipid that anchors the lipopolysaccharide to the outer membrane of the cell. This chain is UDP-3-O-acylglucosamine N-acyltransferase, found in Geobacter metallireducens (strain ATCC 53774 / DSM 7210 / GS-15).